A 142-amino-acid polypeptide reads, in one-letter code: ATP synthase epsilon chain (142 aa).

Belongs to the ATPase epsilon chain family. F-type ATPases have 2 components, CF(1) - the catalytic core - and CF(0) - the membrane proton channel. CF(1) has five subunits: alpha(3), beta(3), gamma(1), delta(1), epsilon(1). CF(0) has three main subunits: a, b and c.

It localises to the cell inner membrane. Functionally, produces ATP from ADP in the presence of a proton gradient across the membrane. The sequence is that of ATP synthase epsilon chain from Shewanella sediminis (strain HAW-EB3).